We begin with the raw amino-acid sequence, 638 residues long: Chaperone protein DnaK (638 aa).

Position 196 is a phosphothreonine; by autocatalysis (Thr-196). A disordered region spans residues 592–638 (ASNLYQQPGAEAGAAPQPETNGQQESKGGDGAVNAEYEVIDGDDDKK). The span at 597–610 (QQPGAEAGAAPQPE) shows a compositional bias: low complexity. Residues 629–638 (EVIDGDDDKK) are compositionally biased toward acidic residues.

Belongs to the heat shock protein 70 family.

Acts as a chaperone. This chain is Chaperone protein DnaK, found in Chlorobaculum parvum (strain DSM 263 / NCIMB 8327) (Chlorobium vibrioforme subsp. thiosulfatophilum).